The sequence spans 404 residues: Arginine biosynthesis bifunctional protein ArgJ (404 aa).

Positions 166, 189, 200, 280, 399, and 404 each coordinate substrate. The active-site Nucleophile is the T200.

It belongs to the ArgJ family. In terms of assembly, heterotetramer of two alpha and two beta chains.

The protein resides in the cytoplasm. The enzyme catalyses N(2)-acetyl-L-ornithine + L-glutamate = N-acetyl-L-glutamate + L-ornithine. The catalysed reaction is L-glutamate + acetyl-CoA = N-acetyl-L-glutamate + CoA + H(+). It participates in amino-acid biosynthesis; L-arginine biosynthesis; L-ornithine and N-acetyl-L-glutamate from L-glutamate and N(2)-acetyl-L-ornithine (cyclic): step 1/1. The protein operates within amino-acid biosynthesis; L-arginine biosynthesis; N(2)-acetyl-L-ornithine from L-glutamate: step 1/4. In terms of biological role, catalyzes two activities which are involved in the cyclic version of arginine biosynthesis: the synthesis of N-acetylglutamate from glutamate and acetyl-CoA as the acetyl donor, and of ornithine by transacetylation between N(2)-acetylornithine and glutamate. This chain is Arginine biosynthesis bifunctional protein ArgJ, found in Mycolicibacterium paratuberculosis (strain ATCC BAA-968 / K-10) (Mycobacterium paratuberculosis).